Reading from the N-terminus, the 392-residue chain is WD repeat-containing protein GTS1 (392 aa).

WD repeat units follow at residues 81 to 124 (GHSD…QVSR), 128 to 167 (GNDQEIFSFSYGGAADNLLAGGCKEQVLLWDWRNSKQVAC), 171 to 211 (SHMD…NDDD), and 323 to 368 (GHID…TEIN).

In terms of tissue distribution, expressed in germinating seeds, rosettes leaves, flowers and siliques.

Functionally, involved in the control of plant growth development. Acts as negative regulator of seed germination, cell division in meristematic regions, plant growth and overall biomass accumulation. May function by regulating ribosome activities and biogenesis in plant cells. The protein is WD repeat-containing protein GTS1 of Arabidopsis thaliana (Mouse-ear cress).